We begin with the raw amino-acid sequence, 172 residues long: TAVTLVTATLAAASATFPTVRRSVSSSPAAKQPAPGTVAQSFPPGELALRDETGGRGRGTRGIRRTPTAAQGVITPGVAETPAIVRIANPGLPLDRHVFQPVCGLRLLAVWLLVLNLNVALPVTARTPQVVRVVDYATPTLFALQERHEIELVGRRPRLTDETPTALESKDK.

A disordered region spans residues 22–64 (RSVSSSPAAKQPAPGTVAQSFPPGELALRDETGGRGRGTRGIR).

This is an uncharacterized protein from Human cytomegalovirus (strain AD169) (HHV-5).